The chain runs to 370 residues: Ubiquitin carboxyl-terminal hydrolase 12 (370 aa).

Residues 1–4 (MEIL) carry the Required for plasma membrane localization of USP12/WDR20 motif. The USP domain maps to 39 to 369 (FGLVNFGNTC…SGYILFYQSR (331 aa)). C48 (nucleophile) is an active-site residue. Over residues 146–157 (QEKQNGRLRNGD) the composition is skewed to basic and acidic residues. The tract at residues 146–168 (QEKQNGRLRNGDVDNEDNNSTPD) is disordered. Positions 186, 189, 233, and 236 each coordinate Zn(2+). Residue H317 is the Proton acceptor of the active site.

This sequence belongs to the peptidase C19 family. USP12/USP46 subfamily. In terms of assembly, interacts with WDR48. Interacts with WDR20; this interaction promotes translocation of the USP12 complex to the plasma membrane. Component of the USP12/WDR20/WDR48 deubiquitinating complex. Component of the USP12/DMWD/WDR48 deubiquitinating complex. Interacts with PHLPP1. Interacts with RBPJ. Interacts with CBP; this interaction blocks the acetyltransferase activity of CREBBP.

The protein localises to the nucleus. It is found in the cytoplasm. It localises to the cell membrane. It carries out the reaction Thiol-dependent hydrolysis of ester, thioester, amide, peptide and isopeptide bonds formed by the C-terminal Gly of ubiquitin (a 76-residue protein attached to proteins as an intracellular targeting signal).. Activated by interaction with WDR20; WDR48 and DMWD through different allosteric mechanisms. In terms of biological role, deubiquitinating enzyme that plays various roles in the regulation of the immune response and inflammation. During TCR engagement and activation, translocates into the cytoplasm and deubiquitinates its substrates LAT and TRAT1 and prevents their lysosome-dependent degradation to stabilize the TCR signaling complex at the plasma membrane. Plays an essential role in the selective LPS-induced macrophage response through the activation of NF-kappa-B pathway. In addition, promotes that antiviral immune response through targeting DNA sensor IFI16 to inhibit its proteasome-dependent degradation. Participates in the interferon signaling pathway and antiviral response independently of its deubiquitinase activity by maintaining nuclear phosphorylated STAT1 levels via inhibition of its CREBBP-mediated acetylation and subsequent dephosphorylation. Plays an intrinsic role in promoting the differentiation, activation and proliferation of CD4(+) T-cell by activating the NF-kappa-B signaling pathway through deubiquitinating and stabilizing B-cell lymphoma/leukemia 10/BCL10. In myeloid-derived suppressor cells promotes the activation of the NF-kappa-B via deubiquitination and stabilization of RELA. Regulates the 'Lys-63'-linked polyubiquitin chains of BAX and thereby modulates the mitochondrial apoptotic process. Negative regulator of NOTCH signaling that specifically deubiquitinates non-activated NOTCH receptors to target them for lysosomal degradation; deubiquitination of NOTCH stimulates its transport form late endosomes to lysosomes. Protects neurons against HTT/huntingtin-induced polyglutamine expansion-dependent neurodegeneration through regulation of autophagic flux. This function is independent of deubiquitinase activity or of other components of the USP12-WDR20-WDR48 deubiquitinating complex. In complex with WDR48, acts as a potential tumor suppressor by positively regulating PHLPP1 stability. The sequence is that of Ubiquitin carboxyl-terminal hydrolase 12 (Usp12) from Mus musculus (Mouse).